Reading from the N-terminus, the 163-residue chain is IQSTSMDQGILTEDSMNSFIRTLIQAGIWKNKVPKQTARTKDGMQTTVKKTEAEADAMASKGTRLGFQPVVSVDAELLRQQRRFSSPRVLLSENAPLQPPPLYLTEEPTVLNRTSRRKREGKSHRGEYSVCDSESRWVTDKSSAVDIRGHQVSVLGEIRMGPS.

Positions isoleucine 1–serine 3 are cleaved as a signal peptide. A propeptide spanning residues threonine 4–arginine 119 is cleaved from the precursor. The N-linked (GlcNAc...) asparagine glycan is linked to asparagine 112. Positions asparagine 112 to aspartate 132 are disordered. Over residues serine 123–aspartate 132 the composition is skewed to basic and acidic residues.

The protein belongs to the NGF-beta family.

It is found in the secreted. Its function is as follows. Seems to promote the survival of visceral and proprioceptive sensory neurons. The sequence is that of Neurotrophin-3 (NTF3) from Exiliboa placata (Oaxacan dwarf boa).